The chain runs to 234 residues: Large ribosomal subunit protein uL1 (234 aa).

It belongs to the universal ribosomal protein uL1 family. In terms of assembly, part of the 50S ribosomal subunit.

In terms of biological role, binds directly to 23S rRNA. The L1 stalk is quite mobile in the ribosome, and is involved in E site tRNA release. Protein L1 is also a translational repressor protein, it controls the translation of the L11 operon by binding to its mRNA. This chain is Large ribosomal subunit protein uL1, found in Corynebacterium aurimucosum (strain ATCC 700975 / DSM 44827 / CIP 107346 / CN-1) (Corynebacterium nigricans).